Reading from the N-terminus, the 138-residue chain is NADH-quinone oxidoreductase subunit A (138 aa).

The next 3 membrane-spanning stretches (helical) occupy residues 8-28 (FGAV…GYLT), 63-83 (FYVV…LFPW), and 93-113 (FALI…AYAW).

The protein belongs to the complex I subunit 3 family. NDH-1 is composed of 14 different subunits. Subunits NuoA, H, J, K, L, M, N constitute the membrane sector of the complex.

It is found in the cell inner membrane. It catalyses the reaction a quinone + NADH + 5 H(+)(in) = a quinol + NAD(+) + 4 H(+)(out). Functionally, NDH-1 shuttles electrons from NADH, via FMN and iron-sulfur (Fe-S) centers, to quinones in the respiratory chain. The immediate electron acceptor for the enzyme in this species is believed to be a menaquinone. Couples the redox reaction to proton translocation (for every two electrons transferred, four hydrogen ions are translocated across the cytoplasmic membrane), and thus conserves the redox energy in a proton gradient. The chain is NADH-quinone oxidoreductase subunit A from Prosthecochloris aestuarii (strain DSM 271 / SK 413).